We begin with the raw amino-acid sequence, 427 residues long: Serine protease HTRA2, mitochondrial (427 aa).

The tract at residues 33-57 (HTASSSKGSGGDNSKDQENNGQNKS) is disordered. Residues 67–87 (VFQFCVPFSLGALVSAVLIEG) traverse the membrane as a helical segment. The short motif at 78–81 (ALVS) is the IAP-binding element. Residues 144–307 (SNGSGFVIEQ…IPIDYVKVFL (164 aa)) are serine protease. Active-site charge relay system residues include His162, Asp194, and Ser271. A PDZ domain is found at 330–415 (MGITMLTLTP…DLEIVILRGV (86 aa)).

The protein belongs to the peptidase S1C family. Interacts with th/DIAP1 (via BIR 2 domain).

It localises to the mitochondrion intermembrane space. The protein resides in the mitochondrion membrane. It catalyses the reaction Cleavage of non-polar aliphatic amino-acids at the P1 position, with a preference for Val, Ile and Met. At the P2 and P3 positions, Arg is selected most strongly with a secondary preference for other hydrophilic residues.. In terms of biological role, serine protease that shows proteolytic activity against a non-specific substrate beta-casein. Promotes or induces cell death either by direct binding to and inhibition of BIRC proteins (also called inhibitor of apoptosis proteins, IAPs), leading to an increase in caspase activity, or by a BIRC inhibition-independent, caspase-independent and serine protease activity-dependent mechanism. Can antagonize antiapoptotic activity of th/Diap1 by directly inducing the degradation of th/Diap1. This Drosophila persimilis (Fruit fly) protein is Serine protease HTRA2, mitochondrial.